The following is a 419-amino-acid chain: L-rhamnose isomerase (419 aa).

Mn(2+) contacts are provided by histidine 262, aspartate 294, and aspartate 296.

This sequence belongs to the rhamnose isomerase family. Homotetramer. Mn(2+) serves as cofactor.

The protein resides in the cytoplasm. The catalysed reaction is L-rhamnopyranose = L-rhamnulose. It participates in carbohydrate degradation; L-rhamnose degradation; glycerone phosphate from L-rhamnose: step 1/3. Functionally, catalyzes the interconversion of L-rhamnose and L-rhamnulose. This Escherichia coli (strain K12 / MC4100 / BW2952) protein is L-rhamnose isomerase.